The chain runs to 378 residues: mRNA cap guanine-N(7) methyltransferase (378 aa).

Residues 24 to 331 (SRIFFMRNMN…MYLVFGFRKK (308 aa)) form the mRNA cap 0 methyltransferase domain. 33–34 (NN) contributes to the mRNA binding site. K37, A62, D84, D116, Q138, and Y143 together coordinate S-adenosyl-L-methionine. Composition is skewed to basic and acidic residues over residues 335–347 (EKNL…EIKK) and 356–378 (DTDK…PSHC). The tract at residues 335–378 (EKNLESEAPEIKKVTPVPLNEDTDKTAEKNEERIEEKEENPSHC) is disordered.

This sequence belongs to the class I-like SAM-binding methyltransferase superfamily. mRNA cap 0 methyltransferase family.

It is found in the nucleus. It catalyses the reaction a 5'-end (5'-triphosphoguanosine)-ribonucleoside in mRNA + S-adenosyl-L-methionine = a 5'-end (N(7)-methyl 5'-triphosphoguanosine)-ribonucleoside in mRNA + S-adenosyl-L-homocysteine. MRNA-capping methyltransferase that methylates the N7 position of the added guanosine to the 5'-cap structure of mRNAs. Binds RNA containing 5'-terminal GpppC. The polypeptide is mRNA cap guanine-N(7) methyltransferase (Caenorhabditis briggsae).